The chain runs to 159 residues: uncharacterized protein (159 aa).

Disordered regions lie at residues 1–23 and 91–110; these read MEQD…KGQA and AGGG…GPAA.

This is an uncharacterized protein from Homo sapiens (Human).